The chain runs to 219 residues: Endonuclease V (219 aa).

Mg(2+) is bound by residues D41 and D107.

This sequence belongs to the endonuclease V family. It depends on Mg(2+) as a cofactor.

The protein localises to the cytoplasm. The catalysed reaction is Endonucleolytic cleavage at apurinic or apyrimidinic sites to products with a 5'-phosphate.. Functionally, DNA repair enzyme involved in the repair of deaminated bases. Selectively cleaves double-stranded DNA at the second phosphodiester bond 3' to a deoxyinosine leaving behind the intact lesion on the nicked DNA. In Desulfurococcus amylolyticus (strain DSM 18924 / JCM 16383 / VKM B-2413 / 1221n) (Desulfurococcus kamchatkensis), this protein is Endonuclease V.